The following is a 274-amino-acid chain: Penicillin-insensitive murein endopeptidase (274 aa).

Residues 1–19 (MKNTVIALLALLASAGSLA) form the signal peptide. Cystine bridges form between cysteine 44-cysteine 265, cysteine 187-cysteine 235, and cysteine 216-cysteine 223. Histidine 110, histidine 113, aspartate 120, aspartate 147, histidine 150, and histidine 211 together coordinate Zn(2+). Residues 224 to 263 (EDQAPPPPGDGCGAELQSWFEPPKPGSTPPVKKTPPPLPP) are disordered. The segment covering 245 to 263 (PPKPGSTPPVKKTPPPLPP) has biased composition (pro residues).

The protein belongs to the peptidase M74 family. As to quaternary structure, dimer. It depends on Zn(2+) as a cofactor.

It localises to the periplasm. In terms of biological role, murein endopeptidase that cleaves the D-alanyl-meso-2,6-diamino-pimelyl amide bond that connects peptidoglycan strands. Likely plays a role in the removal of murein from the sacculus. In Klebsiella pneumoniae (strain 342), this protein is Penicillin-insensitive murein endopeptidase.